Here is a 2387-residue protein sequence, read N- to C-terminus: Highly reducing polyketide synthase curS1 (2387 aa).

Residues 10–433 enclose the Ketosynthase family 3 (KS3) domain; it reads DVPIAVVGLS…GTNGHVVLES (424 aa). Active-site for beta-ketoacyl synthase activity residues include Cys182, His316, and His356. Residues 551 to 891 are malonyl-CoA:ACP transacylase (MAT) domain; it reads FVFTGQGAQW…ELASELFLKG (341 aa). Ser641 functions as the For malonyltransferase activity in the catalytic mechanism. An N-terminal hotdog fold region spans residues 940–1075; the sequence is KSIIGAQVPM…GLITIDYAET (136 aa). The PKS/mFAS DH domain occupies 940-1259; it reads KSIIGAQVPM…VSELENDSGE (320 aa). Residues 942 to 1256 are dehydratase (DH) domain; sequence IIGAQVPMMD…DYRVSELEND (315 aa). The Proton acceptor; for dehydratase activity role is filled by His972. The tract at residues 1103-1259 is C-terminal hotdog fold; that stretch reads SYTYSKEDFY…VSELENDSGE (157 aa). Asp1169 (proton donor; for dehydratase activity) is an active-site residue. The enoylreductase (ER) domain stretch occupies residues 1673-1987; sequence GLMDTLTFIE…QGKHRGKLVL (315 aa). Residues 2011-2191 form a catalytic ketoreductase (KRc) domain region; that stretch reads STYLFIGGLG…VAVDLGIMRD (181 aa). A Carrier domain is found at 2302–2379; it reads EAVVIITDAL…VFAGKIAEKS (78 aa). At Ser2339 the chain carries O-(pantetheine 4'-phosphoryl)serine.

The protein operates within mycotoxin biosynthesis. In terms of biological role, highly reducing polyketide synthase; part of the gene cluster that mediates the biosynthesis of 10,11-dehydrocurvularin, a prevalent fungal phytotoxin with heat shock response and immune-modulatory activities. The highly reducing polyketide synthase curS1 is responsible for biosynthesis up to the tetraketide stage. The non-reducing polyketide synthase curS2 then conducts four additional chain extension cycles, producing the unreduced part of the nascent octaketide from C-1 to C-8 in 10,11-dehydrocurvularin. This is Highly reducing polyketide synthase curS1 from Aspergillus terreus.